A 404-amino-acid chain; its full sequence is ATP phosphoribosyltransferase regulatory subunit (404 aa).

The protein belongs to the class-II aminoacyl-tRNA synthetase family. HisZ subfamily. In terms of assembly, heteromultimer composed of HisG and HisZ subunits.

The protein localises to the cytoplasm. Its pathway is amino-acid biosynthesis; L-histidine biosynthesis; L-histidine from 5-phospho-alpha-D-ribose 1-diphosphate: step 1/9. Required for the first step of histidine biosynthesis. May allow the feedback regulation of ATP phosphoribosyltransferase activity by histidine. This Picosynechococcus sp. (strain ATCC 27264 / PCC 7002 / PR-6) (Agmenellum quadruplicatum) protein is ATP phosphoribosyltransferase regulatory subunit.